The primary structure comprises 1083 residues: FACT complex subunit spt16 (1083 aa).

A Phosphoserine modification is found at S437. The stretch at 466-504 (LESKLRNEINTEEKRKEHQRELAQQLNERAKDRLARQGN) forms a coiled coil. The disordered stretch occupies residues 923–1083 (FEQGGWTFLD…NGHKSKKSRH (161 aa)). The segment covering 935–987 (SGSEGENETAESEEDEAYNPTDAESDEESDEDSEYSEASEDSEESDEDLGSDE) has biased composition (acidic residues). Residues 988-1023 (ESGKDWSDLEREAAEEDRNHDYAADDKPRNGKFDSK) are compositionally biased toward basic and acidic residues. Positions 1024-1033 (KHGKSSKHSP) are enriched in basic residues. The segment covering 1058-1076 (SSKDKDRKRSRDDSRDNGH) has biased composition (basic and acidic residues).

This sequence belongs to the peptidase M24 family. SPT16 subfamily. In terms of assembly, component of the FACT complex, a stable heterodimer of dre4/spt16 and Ssrp. Interacts with TRL/GAGA.

The protein localises to the nucleus. The protein resides in the chromosome. Its function is as follows. Component of the FACT complex, a general chromatin factor that acts to reorganize nucleosomes. The FACT complex is involved in multiple processes that require DNA as a template such as mRNA elongation, DNA replication and DNA repair. During transcription elongation the FACT complex acts as a histone chaperone that both destabilizes and restores nucleosomal structure. It facilitates the passage of RNA polymerase II and transcription by promoting the dissociation of one histone H2A-H2B dimer from the nucleosome, then subsequently promotes the reestablishment of the nucleosome following the passage of RNA polymerase II. The FACT complex is required for expression of Hox genes. The chain is FACT complex subunit spt16 (dre4) from Drosophila melanogaster (Fruit fly).